The sequence spans 286 residues: Phosphate import ATP-binding protein PstB (286 aa).

A disordered region spans residues 1 to 27; the sequence is MEPKETLRQRWPGRGRTEETGAMKKSD. Positions 15 to 27 are enriched in basic and acidic residues; that stretch reads GRTEETGAMKKSD. Residues 33–281 form the ABC transporter domain; the sequence is MTVEHLNMYY…PDRKETEDYV (249 aa). 65-72 lines the ATP pocket; sequence GPSGCGKS.

This sequence belongs to the ABC transporter superfamily. Phosphate importer (TC 3.A.1.7) family. The complex is composed of two ATP-binding proteins (PstB), two transmembrane proteins (PstC and PstA) and a solute-binding protein (PstS).

The protein resides in the cell membrane. The catalysed reaction is phosphate(out) + ATP + H2O = ADP + 2 phosphate(in) + H(+). Part of the ABC transporter complex PstSACB involved in phosphate import. Responsible for energy coupling to the transport system. This Rubrobacter xylanophilus (strain DSM 9941 / JCM 11954 / NBRC 16129 / PRD-1) protein is Phosphate import ATP-binding protein PstB.